The primary structure comprises 224 residues: Phosphoribosylformylglycinamidine synthase subunit PurQ (224 aa).

The Glutamine amidotransferase type-1 domain occupies lysine 2 to glycine 224. Cysteine 86 (nucleophile) is an active-site residue. Residues histidine 195 and glutamate 197 contribute to the active site.

As to quaternary structure, part of the FGAM synthase complex composed of 1 PurL, 1 PurQ and 2 PurS subunits.

Its subcellular location is the cytoplasm. The enzyme catalyses N(2)-formyl-N(1)-(5-phospho-beta-D-ribosyl)glycinamide + L-glutamine + ATP + H2O = 2-formamido-N(1)-(5-O-phospho-beta-D-ribosyl)acetamidine + L-glutamate + ADP + phosphate + H(+). It catalyses the reaction L-glutamine + H2O = L-glutamate + NH4(+). The protein operates within purine metabolism; IMP biosynthesis via de novo pathway; 5-amino-1-(5-phospho-D-ribosyl)imidazole from N(2)-formyl-N(1)-(5-phospho-D-ribosyl)glycinamide: step 1/2. In terms of biological role, part of the phosphoribosylformylglycinamidine synthase complex involved in the purines biosynthetic pathway. Catalyzes the ATP-dependent conversion of formylglycinamide ribonucleotide (FGAR) and glutamine to yield formylglycinamidine ribonucleotide (FGAM) and glutamate. The FGAM synthase complex is composed of three subunits. PurQ produces an ammonia molecule by converting glutamine to glutamate. PurL transfers the ammonia molecule to FGAR to form FGAM in an ATP-dependent manner. PurS interacts with PurQ and PurL and is thought to assist in the transfer of the ammonia molecule from PurQ to PurL. In Ligilactobacillus salivarius (strain UCC118) (Lactobacillus salivarius), this protein is Phosphoribosylformylglycinamidine synthase subunit PurQ.